A 357-amino-acid polypeptide reads, in one-letter code: F-box only protein 25 (357 aa).

An interaction with beta-actin region spans residues 1–83 (MPFLGQDWRS…NDTNTQCFYR (83 aa)). The F-box domain maps to 225–273 (LTLSDLPVHMLSNILYRFSDGWDIVTLGQVTPTLSALSEDRQLWKKLCQ).

Part of a SCF (SKP1-cullin-F-box) protein ligase complex consisting of FBXO25, SKP1, CUL1 and RBX1. Interacts directly with SKP1 and CUL1. Interacts (via C-terminus) with beta-actin (via N-terminus).

Its subcellular location is the nucleus. It functions in the pathway protein modification; protein ubiquitination. Its function is as follows. Substrate-recognition component of the SCF (SKP1-CUL1-F-box protein)-type E3 ubiquitin ligase complex. May play a role in accumulation of expanded polyglutamine (polyQ) protein huntingtin (HTT). This is F-box only protein 25 (FBXO25) from Bos taurus (Bovine).